The chain runs to 378 residues: Cytochrome b (378 aa).

The next 4 membrane-spanning stretches (helical) occupy residues 34-54 (FGSL…FLAM), 78-99 (WLLR…YLHV), 114-134 (WLIG…GYVL), and 179-199 (FFTF…IHLL). 2 residues coordinate heme b: H84 and H98. H183 and H197 together coordinate heme b. A ubiquinone is bound at residue H202. 4 helical membrane passes run 227–247 (FKDI…VLIS), 289–309 (LGGV…PFYN), 321–341 (INQV…WIGA), and 348–368 (YVLI…VNPL).

The protein belongs to the cytochrome b family. The main subunits of complex b-c1 are: cytochrome b, cytochrome c1 and the Rieske protein. The cofactor is heme b.

The protein resides in the mitochondrion inner membrane. Functionally, component of the ubiquinol-cytochrome c reductase complex (complex III or cytochrome b-c1 complex) that is part of the mitochondrial respiratory chain. The b-c1 complex mediates electron transfer from ubiquinol to cytochrome c. Contributes to the generation of a proton gradient across the mitochondrial membrane that is then used for ATP synthesis. The sequence is that of Cytochrome b (mt:Cyt-b) from Drosophila mauritiana (Fruit fly).